The sequence spans 544 residues: Dihydrolipoyllysine-residue acetyltransferase component of pyruvate dehydrogenase complex (544 aa).

2 Lipoyl-binding domains span residues 1-76 (MYEF…VTID) and 113-188 (IYDF…VLIG). An N6-lipoyllysine mark is found at K42 and K154. The 38-residue stretch at 242–279 (LASPVARKLASDLGVDIATIKGSGEQGRVMKDDVQNSK) folds into the Peripheral subunit-binding (PSBD) domain. H516 is an active-site residue.

The protein belongs to the 2-oxoacid dehydrogenase family. As to quaternary structure, forms a 24-polypeptide structural core with octahedral symmetry. It depends on (R)-lipoate as a cofactor.

The enzyme catalyses N(6)-[(R)-dihydrolipoyl]-L-lysyl-[protein] + acetyl-CoA = N(6)-[(R)-S(8)-acetyldihydrolipoyl]-L-lysyl-[protein] + CoA. The pyruvate dehydrogenase complex catalyzes the overall conversion of pyruvate to acetyl-CoA and CO(2). It contains multiple copies of three enzymatic components: pyruvate dehydrogenase (E1), dihydrolipoamide acetyltransferase (E2) and lipoamide dehydrogenase (E3). The protein is Dihydrolipoyllysine-residue acetyltransferase component of pyruvate dehydrogenase complex (pdhC) of Acholeplasma laidlawii.